Consider the following 148-residue polypeptide: Large ribosomal subunit protein uL15 (148 aa).

Residues 1-10 show a composition bias toward basic and acidic residues; that stretch reads MQLHNLEYKK. The interval 1-42 is disordered; that stretch reads MQLHNLEYKKGSRNHKEKRVGRGHGSGLGKTSGRGQDGQKAR. Residues 11–22 show a composition bias toward basic residues; that stretch reads GSRNHKEKRVGR. Residues 23–36 are compositionally biased toward gly residues; the sequence is GHGSGLGKTSGRGQ.

It belongs to the universal ribosomal protein uL15 family. Part of the 50S ribosomal subunit.

Binds to the 23S rRNA. This Ureaplasma parvum serovar 3 (strain ATCC 27815 / 27 / NCTC 11736) protein is Large ribosomal subunit protein uL15.